Reading from the N-terminus, the 537-residue chain is MAKIIKYDEEARQGMLEGLDELANTVKVTLGPKGRNVVLDKSYGAPTITNDGVSIAKEIDLEDPYQRIGAELVKEVAKKTDDVAGDGTTTATVLAQALVHEGLKNVTSGSNPIALRRGIEKASQTIVKNLLENAKPVETKDQIAATATISAGDPEVGEKIAEALDKVGQDGVVTVEDNNKFGLDLDFTEGMRFDKGYISPYFVTNADDQTAVLEDPYILLTSGKVSSQQDIVHIADLVIKSGKPLLIVAEDVDGEALPTLVLNKIRGTFNTVAVKAPGFGDRRKAMLQDMAILTGAQVVSDELGLKLDSIDDTVLGHAAKVIVSKDETTIVSGAGSKEDIAARVAQIRSEIEASDSDYDREKLQERLAKLAGGVAVIKVGAATEVEAKERKHRIEDAVRNAKAAIEEGLLPGGGVALVQAAGEAEKSVKLDGDEATGADIVFRAIEAPLKQIAENAGLSGEVVIDKVRTLPAGSGLNAATGEYEDLMKAGVTDPVKVTRSALQNAASIAGLFLTTEAVVANKPEPPAPAAAQPDMGY.

ATP is bound by residues T29–P32, D86–T90, G413, N477–A479, and D493.

Belongs to the chaperonin (HSP60) family. As to quaternary structure, forms a cylinder of 14 subunits composed of two heptameric rings stacked back-to-back. Interacts with the co-chaperonin GroES.

It localises to the cytoplasm. The enzyme catalyses ATP + H2O + a folded polypeptide = ADP + phosphate + an unfolded polypeptide.. Together with its co-chaperonin GroES, plays an essential role in assisting protein folding. The GroEL-GroES system forms a nano-cage that allows encapsulation of the non-native substrate proteins and provides a physical environment optimized to promote and accelerate protein folding. In Parascardovia denticolens (Bifidobacterium denticolens), this protein is Chaperonin GroEL.